Reading from the N-terminus, the 58-residue chain is Large ribosomal subunit protein eL37 (58 aa).

4 residues coordinate Zn(2+): Cys-20, Cys-23, Cys-35, and Cys-38. The C4-type zinc finger occupies 20-38; that stretch reads CRRCGEKSYHTKKKVCSSC.

The protein belongs to the eukaryotic ribosomal protein eL37 family. The cofactor is Zn(2+).

Functionally, binds to the 23S rRNA. This Haloquadratum walsbyi (strain DSM 16790 / HBSQ001) protein is Large ribosomal subunit protein eL37.